A 113-amino-acid polypeptide reads, in one-letter code: Mitochondrial import inner membrane translocase subunit tim16 (113 aa).

The J-like stretch occupies residues 56-108 (KILGLENVETVSKEDIDKKYNELLTINDPKDGGSEYLQIKISGAKHCLHSALK).

Belongs to the TIM16/PAM16 family. Probable component of the PAM complex at least composed of a mitochondrial HSP70 protein, grepE, tim16 and tim14. Associates with the TIM23 complex.

The protein localises to the mitochondrion inner membrane. Functionally, regulates ATP-dependent protein translocation into the mitochondrial matrix. In Dictyostelium discoideum (Social amoeba), this protein is Mitochondrial import inner membrane translocase subunit tim16 (timm16).